The sequence spans 456 residues: Ammonium transporter Amt2 (456 aa).

A run of 11 helical transmembrane segments spans residues 18-38 (LVWV…FAML), 61-81 (IGVI…AGLT), 109-129 (WLFG…AVAG), 141-161 (ILIA…GGFL), 170-190 (AGGM…AWII), 211-231 (ITFA…FNVG), 255-275 (VALV…GVAF), 281-301 (VDTL…TAIA), 304-324 (IVWP…PIVF), 339-359 (VFPV…VFAV), and 377-397 (VGVG…FGGF).

The protein belongs to the ammonia transporter channel (TC 1.A.11.2) family. In terms of assembly, homotrimer. Interacts with both GlnK1 and GlnK2 after ammonium shock.

It localises to the cell membrane. Functionally, involved in the uptake of ammonium/ammonia (NH(4)(+)/NH(3)). Transport is electrogenic. This chain is Ammonium transporter Amt2, found in Haloferax mediterranei (strain ATCC 33500 / DSM 1411 / JCM 8866 / NBRC 14739 / NCIMB 2177 / R-4) (Halobacterium mediterranei).